A 351-amino-acid chain; its full sequence is S-adenosylmethionine:tRNA ribosyltransferase-isomerase (351 aa).

The protein belongs to the QueA family. Monomer.

The protein localises to the cytoplasm. The catalysed reaction is 7-aminomethyl-7-carbaguanosine(34) in tRNA + S-adenosyl-L-methionine = epoxyqueuosine(34) in tRNA + adenine + L-methionine + 2 H(+). The protein operates within tRNA modification; tRNA-queuosine biosynthesis. Transfers and isomerizes the ribose moiety from AdoMet to the 7-aminomethyl group of 7-deazaguanine (preQ1-tRNA) to give epoxyqueuosine (oQ-tRNA). In Acinetobacter baumannii (strain SDF), this protein is S-adenosylmethionine:tRNA ribosyltransferase-isomerase.